The sequence spans 69 residues: Small ribosomal subunit protein uS7 (69 aa).

It belongs to the universal ribosomal protein uS7 family. As to quaternary structure, part of the 30S ribosomal subunit.

In terms of biological role, one of the primary rRNA binding proteins, it binds directly to 16S rRNA where it nucleates assembly of the head domain of the 30S subunit. Is located at the subunit interface close to the decoding center. In Methanococcoides methylutens, this protein is Small ribosomal subunit protein uS7 (rps7).